Consider the following 298-residue polypeptide: Mitochondrial 2-oxodicarboxylate carrier (298 aa).

3 Solcar repeats span residues 10-99 (HETS…YKKF), 106-195 (SPGL…VKNI), and 204-293 (LEFL…TYAW). A run of 6 helical transmembrane segments spans residues 16–36 (VAAG…LDVV), 69–88 (FGFY…KRAV), 112–132 (LIAG…FEVV), 166–186 (GLNK…MVYF), 204–224 (LEFL…SVFN), and 276–296 (LGPG…WLQE).

The protein belongs to the mitochondrial carrier (TC 2.A.29) family.

It localises to the mitochondrion inner membrane. It catalyses the reaction 2-oxoadipate(in) + 2-oxoglutarate(out) = 2-oxoadipate(out) + 2-oxoglutarate(in). It carries out the reaction hexanedioate(in) + 2-oxoglutarate(out) = hexanedioate(out) + 2-oxoglutarate(in). The catalysed reaction is L-2-aminoadipate(in) + 2-oxoglutarate(out) = L-2-aminoadipate(out) + 2-oxoglutarate(in). The enzyme catalyses glutarate(in) + 2-oxoglutarate(out) = glutarate(out) + 2-oxoglutarate(in). It catalyses the reaction 2-oxoheptanedioate(in) + 2-oxoglutarate(out) = 2-oxoheptanedioate(out) + 2-oxoglutarate(in). It carries out the reaction heptanedioate(in) + 2-oxoglutarate(out) = heptanedioate(out) + 2-oxoglutarate(in). The catalysed reaction is citrate(in) + 2-oxoglutarate(out) = citrate(out) + 2-oxoglutarate(in). In terms of biological role, transports dicarboxylates across the inner membranes of mitochondria by a counter-exchange mechanism. Can transport 2-oxoadipate (2-oxohexanedioate), 2-oxoglutarate, adipate (hexanedioate), glutarate, and to a lesser extent, pimelate (heptanedioate), 2-oxopimelate (2-oxoheptanedioate), 2-aminoadipate (2-aminohexanedioate), oxaloacetate, and citrate. Plays a central role in catabolism of lysine, hydroxylysine, and tryptophan, by transporting common metabolite intermediates (such as 2-oxoadipate) into the mitochondria, where it is converted into acetyl-CoA and can enter the citric acid (TCA) cycle. This chain is Mitochondrial 2-oxodicarboxylate carrier (Slc25a21), found in Mus musculus (Mouse).